Here is a 174-residue protein sequence, read N- to C-terminus: Large ribosomal subunit protein bL12cz (174 aa).

A chloroplast-targeting transit peptide spans 1 to 45; sequence MASTTFSSAFSILSLPSSSPSPPPSPPRTLPVANRRRRAAAVAST. Residues 1–46 form a disordered region; the sequence is MASTTFSSAFSILSLPSSSPSPPPSPPRTLPVANRRRRAAAVASTA. Low complexity predominate over residues 7 to 18; it reads SSAFSILSLPSS. A compositionally biased stretch (pro residues) spans 19 to 29; sequence SPSPPPSPPRT.

This sequence belongs to the bacterial ribosomal protein bL12 family.

The protein localises to the plastid. The protein resides in the chloroplast. The protein is Large ribosomal subunit protein bL12cz (RPL12-1) of Secale cereale (Rye).